We begin with the raw amino-acid sequence, 150 residues long: UPF0178 protein BamMC406_1579 (150 aa).

It belongs to the UPF0178 family.

The chain is UPF0178 protein BamMC406_1579 from Burkholderia ambifaria (strain MC40-6).